Consider the following 111-residue polypeptide: Universal stress protein B (111 aa).

2 helical membrane-spanning segments follow: residues 1 to 21 and 90 to 110; these read MISTVSLFWALCVVCIVNMAR and FLLTSALCGLVVVSLIALMIW.

This sequence belongs to the universal stress protein B family.

The protein localises to the cell inner membrane. This Salmonella arizonae (strain ATCC BAA-731 / CDC346-86 / RSK2980) protein is Universal stress protein B.